Reading from the N-terminus, the 508-residue chain is Lysine--tRNA ligase (508 aa).

2 residues coordinate Mg(2+): Glu-418 and Glu-425.

It belongs to the class-II aminoacyl-tRNA synthetase family. In terms of assembly, homodimer. It depends on Mg(2+) as a cofactor.

It localises to the cytoplasm. The enzyme catalyses tRNA(Lys) + L-lysine + ATP = L-lysyl-tRNA(Lys) + AMP + diphosphate. The protein is Lysine--tRNA ligase of Burkholderia pseudomallei (strain 1710b).